The primary structure comprises 259 residues: Flap endonuclease Xni (259 aa).

Asp-109 is a Mg(2+) binding site. In terms of domain architecture, 5'-3' exonuclease spans 165 to 255 (VKPQQLSDYW…FNLQDLRFTA (91 aa)). K(+) is bound by residues Leu-176, Ile-187, and Ile-190. The interaction with DNA stretch occupies residues 189 to 194 (GIGPKA).

The protein belongs to the Xni family. It depends on Mg(2+) as a cofactor. K(+) serves as cofactor.

Functionally, has flap endonuclease activity. During DNA replication, flap endonucleases cleave the 5'-overhanging flap structure that is generated by displacement synthesis when DNA polymerase encounters the 5'-end of a downstream Okazaki fragment. The sequence is that of Flap endonuclease Xni from Vibrio vulnificus (strain YJ016).